We begin with the raw amino-acid sequence, 93 residues long: U12-lycotoxin-Ls1c (93 aa).

The first 18 residues, 1–18 (MKFAVILLFSLVVLAVAS), serve as a signal peptide directing secretion. A propeptide spanning residues 19–38 (ESVEEVRREIDIEDLPEQQR) is cleaved from the precursor.

This sequence belongs to the neurotoxin 31 family. In terms of processing, contains 5 disulfide bonds. Expressed by the venom gland.

It localises to the secreted. The sequence is that of U12-lycotoxin-Ls1c from Lycosa singoriensis (Wolf spider).